We begin with the raw amino-acid sequence, 308 residues long: Cytochrome b (308 aa).

4 helical membrane-spanning segments follow: residues 1–21 (FGSL…LLAT), 45–66 (WLIR…YLHI), 81–101 (WNTG…GYVL), and 146–166 (FFAL…VHLT). Heme b contacts are provided by His51 and His65. His150 and His164 together coordinate heme b. An a ubiquinone-binding site is contributed by His169. The next 3 membrane-spanning stretches (helical) occupy residues 194–214 (MKDI…ALFS), 256–276 (LGGV…PLLH), and 288–308 (LSQI…WVGS).

Belongs to the cytochrome b family. As to quaternary structure, the cytochrome bc1 complex contains 11 subunits: 3 respiratory subunits (MT-CYB, CYC1 and UQCRFS1), 2 core proteins (UQCRC1 and UQCRC2) and 6 low-molecular weight proteins (UQCRH/QCR6, UQCRB/QCR7, UQCRQ/QCR8, UQCR10/QCR9, UQCR11/QCR10 and a cleavage product of UQCRFS1). This cytochrome bc1 complex then forms a dimer. The cofactor is heme b.

The protein resides in the mitochondrion inner membrane. Its function is as follows. Component of the ubiquinol-cytochrome c reductase complex (complex III or cytochrome b-c1 complex) that is part of the mitochondrial respiratory chain. The b-c1 complex mediates electron transfer from ubiquinol to cytochrome c. Contributes to the generation of a proton gradient across the mitochondrial membrane that is then used for ATP synthesis. The sequence is that of Cytochrome b (MT-CYB) from Amblyornis macgregoriae (Macgregor's bowerbird).